Reading from the N-terminus, the 188-residue chain is Murein DD-endopeptidase MepS/Murein LD-carboxypeptidase (188 aa).

A signal peptide spans 1–26 (MVKSQPILRYILRGIPAIAVAVLLSA). C27 carries the N-palmitoyl cysteine lipid modification. A lipid anchor (S-diacylglycerol cysteine) is attached at C27. Residues 64-185 (VDVKSRIMDQ…KRYNEARRVL (122 aa)) form the NlpC/P60 domain. The Nucleophile role is filled by C94. H145 functions as the Proton acceptor in the catalytic mechanism. H157 is an active-site residue.

It belongs to the peptidase C40 family. In terms of assembly, monomer.

The protein resides in the cell outer membrane. The catalysed reaction is N-acetyl-D-glucosaminyl-N-acetylmuramoyl-L-alanyl-meso-2,6-diaminoheptanedioyl-D-alanine + H2O = N-acetyl-D-glucosaminyl-N-acetylmuramoyl-L-alanyl-meso-2,6-diaminoheptanedioate + D-alanine. Its pathway is cell wall biogenesis; cell wall polysaccharide biosynthesis. Its function is as follows. A murein DD-endopeptidase with specificity for D-Ala-meso-diaminopimelic acid (mDAP) cross-links. Its role is probably to cleave D-Ala-mDAP cross-links to allow insertion of new glycans and thus cell wall expansion. Functionally redundant with MepM and MepH. Also has weak LD-carboxypeptidase activity on L-mDAP-D-Ala peptide bonds. The polypeptide is Murein DD-endopeptidase MepS/Murein LD-carboxypeptidase (mepS) (Escherichia coli O157:H7).